The chain runs to 294 residues: Tryptophan 2,3-dioxygenase (294 aa).

The disordered stretch occupies residues 1-20 (MSEFKGCPFSGAASEAGTKA). Substrate contacts are provided by residues 63–67 (FIVQH), Tyr-125, and Arg-129. His-252 is a binding site for heme. Residue Thr-266 coordinates substrate.

It belongs to the tryptophan 2,3-dioxygenase family. As to quaternary structure, homotetramer. Heme is required as a cofactor.

It carries out the reaction L-tryptophan + O2 = N-formyl-L-kynurenine. The protein operates within amino-acid degradation; L-tryptophan degradation via kynurenine pathway; L-kynurenine from L-tryptophan: step 1/2. Its function is as follows. Heme-dependent dioxygenase that catalyzes the oxidative cleavage of the L-tryptophan (L-Trp) pyrrole ring and converts L-tryptophan to N-formyl-L-kynurenine. Catalyzes the oxidative cleavage of the indole moiety. This Cupriavidus necator (strain ATCC 17699 / DSM 428 / KCTC 22496 / NCIMB 10442 / H16 / Stanier 337) (Ralstonia eutropha) protein is Tryptophan 2,3-dioxygenase.